We begin with the raw amino-acid sequence, 356 residues long: MQTLHALLRDIPAPDAEAMARAQQHIDGLLKPPGSLGRLETLAVQLAGMPGLNGTPQVGEKAVLVMCADHGVWDEGVAVSPKIVTAIQAANMTQGTTGVCVLAAQAGAKVHVIDVGIDAEPIPGVVNMRVARGCGNIAVGPAMSRSQAEALLLEVSRYTCDLAQRGVTLFGVGELGMANTTPAAAMVSVFTGSDAKEVVGIGANLPPSRIDNKVDVVRRAIAINQPNPRDGIDVLSKVGGFDLVGMTGVMLGAARCGLPVLLDGFLSYSAALAACQIAPAVRPYLIPSHFSAEKGARIALAHLSMEPYLHMAMRLGEGSGAALAMPIVEAACAMFHNMGELAASNIVLPEGNANAT.

The Proton acceptor role is filled by glutamate 317.

It belongs to the CobT family. In terms of assembly, homodimer.

The enzyme catalyses 5,6-dimethylbenzimidazole + nicotinate beta-D-ribonucleotide = alpha-ribazole 5'-phosphate + nicotinate + H(+). The protein operates within nucleoside biosynthesis; alpha-ribazole biosynthesis; alpha-ribazole from 5,6-dimethylbenzimidazole: step 1/2. In terms of biological role, catalyzes the synthesis of alpha-ribazole-5'-phosphate from nicotinate mononucleotide (NAMN) and 5,6-dimethylbenzimidazole (DMB). This is Nicotinate-nucleotide--dimethylbenzimidazole phosphoribosyltransferase from Salmonella paratyphi C (strain RKS4594).